Here is a 152-residue protein sequence, read N- to C-terminus: Mitochondrial fission 1 protein (152 aa).

Methionine 1 bears the N-acetylmethionine mark. Residues 1–122 are Cytoplasmic-facing; it reads MEAVLNELVS…LIDKAMKKDG (122 aa). Serine 10 is subject to Phosphoserine. One copy of the TPR repeat lies at 71-104; that stretch reads RDYVFYLAVGNYRLKEYEKALKYVRGLLQTEPQN. A helical membrane pass occupies residues 123 to 143; that stretch reads LVGMAIVGGMALGVAGLAGLI. The Mitochondrial intermembrane portion of the chain corresponds to 144–152; the sequence is GLAVSKSKS.

Belongs to the FIS1 family. As to quaternary structure, interacts with DNM1L/DLP1 through the TPR region; may form part of a larger protein complex at the endoplasmic reticulum-mitochondrial interface during mitochondrial fission. Interacts with MARCHF5. Interacts with MIEF1. Interacts with PEX11A, PEX11B and PEX11G. Ubiquitinated by MARCHF5.

The protein localises to the mitochondrion outer membrane. It is found in the peroxisome membrane. In terms of biological role, involved in the fragmentation of the mitochondrial network and its perinuclear clustering. Plays a minor role in the recruitment and association of the fission mediator dynamin-related protein 1 (DNM1L) to the mitochondrial surface and mitochondrial fission. May not be essential for the assembly of functional fission complexes and the subsequent membrane scission event. Also mediates peroxisomal fission. May act when the products of fission are directed toward mitochondrial homeostasis, mitophagy, or apoptosis. Can induce cytochrome c release from the mitochondrion to the cytosol, ultimately leading to apoptosis. The protein is Mitochondrial fission 1 protein of Rattus norvegicus (Rat).